The following is a 129-amino-acid chain: C-type natriuretic peptide 1 (129 aa).

The signal sequence occupies residues 1–24 (MSYKRGTCLGFIMLLMVSHHHTKG). The propeptide occupies 25-107 (KPLSSLQNLS…SRRYRQRNKK (83 aa)). Cysteine 113 and cysteine 129 are joined by a disulfide.

This sequence belongs to the natriuretic peptide family.

It localises to the secreted. Functionally, hormone which plays a role in endochondral ossification through regulation of cartilaginous growth plate chondrocytes proliferation and differentiation. May also be vasoactive and natriuretic. May be important for freshwater adaptation. The chain is C-type natriuretic peptide 1 from Aquarana catesbeiana (American bullfrog).